Consider the following 311-residue polypeptide: Delta(1)-pyrroline-2-carboxylate/Delta(1)-piperideine-2-carboxylate reductase (311 aa).

Belongs to the ornithine cyclodeaminase/mu-crystallin family. Homodimer.

The catalysed reaction is L-pipecolate + NAD(+) = Delta(1)-piperideine-2-carboxylate + NADH + H(+). It catalyses the reaction L-pipecolate + NADP(+) = Delta(1)-piperideine-2-carboxylate + NADPH + H(+). The enzyme catalyses L-proline + NAD(+) = 1-pyrroline-2-carboxylate + NADH + H(+). It carries out the reaction L-proline + NADP(+) = 1-pyrroline-2-carboxylate + NADPH + H(+). The protein operates within amino-acid degradation. In terms of biological role, catalyzes the reduction of both Delta(1)-pyrroline-2-carboxylate (Pyr2C) and Delta(1)-piperideine-2-carboxylate (Pip2C) to L-proline and L-pipecolate, respectively, using NADPH or NADH as the electron donor. Can also catalyze the reverse oxidation reactions, albeit at a much lower rate. Together with LhpH, is involved in a trans-3-hydroxy-L-proline (t3LHyp) degradation pathway to L-proline, which allows A.brasilense to grow on t3LHyp as a sole carbon source. Also appears to be involved in D-proline and D-lysine metabolism. Does not show ornithine cyclodeaminase (OCD) activity. The sequence is that of Delta(1)-pyrroline-2-carboxylate/Delta(1)-piperideine-2-carboxylate reductase from Azospirillum brasilense.